We begin with the raw amino-acid sequence, 481 residues long: O-acetyltransferase andG (481 aa).

The protein belongs to the fumigaclavine B O-acetyltransferase family. As to quaternary structure, monomer.

Its pathway is secondary metabolite biosynthesis; terpenoid biosynthesis. Its function is as follows. O-acetyltransferase; part of the gene cluster that mediates the biosynthesis of anditomin, a fungal meroterpenoid. The first step of the pathway is the synthesis of 3,5-dimethylorsellinic acid (DMOA) by the polyketide synthase andM. DMOA is then converted to the phthalide compound 5,7-dihydroxy-4,6-dimethylphthalide (DHDMP) by the cytochrome P450 monooxygenase andK, which is further prenylated by the prenyltransferase andD to yield farnesyl-DHDMP. Further epoxidation by the FAD-dependent monooxygenase andE leads to epoxyfarnesyl-DHDMP. The next step involves the terpene cyclase andB that converts epoxyfarnesyl-DHDMP into preandiloid A through opening of the epoxide ring followed by the cyclization of the farnesyl moiety. Preandiloid A is in turn oxidized at the C-3 hydroxyl group to yield preandiloid B by the dehydrogenase andC. The dioxygenase andA is solely responsible for the dehydrogenation of preandiloid B leading to the enone preandiloid C, as well as for the intriguing structural rearrangement to generate the bicyclo[2.2.2]octane core, transforming preandiloid C into andiconin. FAD-binding monooxygenase andJ then produces andilesin D which is reduced by dehydrogenase andI to yield andilesin A. Action of acetyltransferase andG followed by a spontaneous acetate elimination leads then to andilesin B, which is in turn substrate of the short chain dehydrogenase andH to yield andilesin C. Finally, the dioxygenase andF catalyzes the transformation of andilesin C to anditomin. The chain is O-acetyltransferase andG from Emericella variicolor (Aspergillus stellatus).